Consider the following 473-residue polypeptide: UDP-N-acetylmuramoylalanine--D-glutamate ligase (473 aa).

Position 120–126 (120–126 (GSNGKTT)) interacts with ATP.

It belongs to the MurCDEF family.

It localises to the cytoplasm. It carries out the reaction UDP-N-acetyl-alpha-D-muramoyl-L-alanine + D-glutamate + ATP = UDP-N-acetyl-alpha-D-muramoyl-L-alanyl-D-glutamate + ADP + phosphate + H(+). It participates in cell wall biogenesis; peptidoglycan biosynthesis. In terms of biological role, cell wall formation. Catalyzes the addition of glutamate to the nucleotide precursor UDP-N-acetylmuramoyl-L-alanine (UMA). This chain is UDP-N-acetylmuramoylalanine--D-glutamate ligase, found in Nitrosospira multiformis (strain ATCC 25196 / NCIMB 11849 / C 71).